Consider the following 385-residue polypeptide: Flap endonuclease 1 (385 aa).

Residues 1 to 104 form an N-domain region; sequence MGILGLSKLI…GELAKRAERR (104 aa). Aspartate 34 contacts Mg(2+). Residues arginine 47 and arginine 70 each coordinate DNA. Residues aspartate 86, glutamate 158, glutamate 160, aspartate 179, and aspartate 181 each contribute to the Mg(2+) site. Residues 122-253 form an I-domain region; the sequence is GIEKFNRRLV…KRAIELINTY (132 aa). Glutamate 158 serves as a coordination point for DNA. Positions 231 and 233 each coordinate DNA. Aspartate 233 serves as a coordination point for Mg(2+). Residues 336-344 form an interaction with PCNA region; that stretch reads TQVRLDSFF. The disordered stretch occupies residues 346 to 385; sequence TLPSTPNATNAAKRKADEAKKSANNKKAKTSGGGRGRRPK. Residues 368 to 385 are compositionally biased toward basic residues; it reads ANNKKAKTSGGGRGRRPK.

The protein belongs to the XPG/RAD2 endonuclease family. FEN1 subfamily. As to quaternary structure, interacts with PCNA. Three molecules of FEN1 bind to one PCNA trimer with each molecule binding to one PCNA monomer. PCNA stimulates the nuclease activity without altering cleavage specificity. The cofactor is Mg(2+). Post-translationally, phosphorylated. Phosphorylation upon DNA damage induces relocalization to the nuclear plasma.

The protein resides in the nucleus. It localises to the nucleolus. Its subcellular location is the nucleoplasm. The protein localises to the mitochondrion. In terms of biological role, structure-specific nuclease with 5'-flap endonuclease and 5'-3' exonuclease activities involved in DNA replication and repair. During DNA replication, cleaves the 5'-overhanging flap structure that is generated by displacement synthesis when DNA polymerase encounters the 5'-end of a downstream Okazaki fragment. It enters the flap from the 5'-end and then tracks to cleave the flap base, leaving a nick for ligation. Also involved in the long patch base excision repair (LP-BER) pathway, by cleaving within the apurinic/apyrimidinic (AP) site-terminated flap. Acts as a genome stabilization factor that prevents flaps from equilibrating into structures that lead to duplications and deletions. Also possesses 5'-3' exonuclease activity on nicked or gapped double-stranded DNA, and exhibits RNase H activity. Also involved in replication and repair of rDNA and in repairing mitochondrial DNA. This chain is Flap endonuclease 1, found in Drosophila sechellia (Fruit fly).